We begin with the raw amino-acid sequence, 175 residues long: ATP-dependent protease subunit HslV (175 aa).

T2 is an active-site residue. Na(+) is bound by residues A156, C159, and T162.

The protein belongs to the peptidase T1B family. HslV subfamily. In terms of assembly, a double ring-shaped homohexamer of HslV is capped on each side by a ring-shaped HslU homohexamer. The assembly of the HslU/HslV complex is dependent on binding of ATP.

It is found in the cytoplasm. It carries out the reaction ATP-dependent cleavage of peptide bonds with broad specificity.. With respect to regulation, allosterically activated by HslU binding. Its function is as follows. Protease subunit of a proteasome-like degradation complex believed to be a general protein degrading machinery. The polypeptide is ATP-dependent protease subunit HslV (Rhizobium rhizogenes (strain K84 / ATCC BAA-868) (Agrobacterium radiobacter)).